Reading from the N-terminus, the 288-residue chain is Thiamine-monophosphate kinase (288 aa).

Mg(2+) contacts are provided by Asp20, Thr30, and Asp32. Asp39 is a binding site for substrate. 2 residues coordinate Mg(2+): Asp60 and Asp107. ATP-binding positions include 106-107 (GD) and Arg130. Asp188 contacts Mg(2+). Ser190 lines the ATP pocket. Asp191 lines the Mg(2+) pocket. Trp286 contacts substrate.

Belongs to the thiamine-monophosphate kinase family.

It catalyses the reaction thiamine phosphate + ATP = thiamine diphosphate + ADP. It functions in the pathway cofactor biosynthesis; thiamine diphosphate biosynthesis; thiamine diphosphate from thiamine phosphate: step 1/1. Its function is as follows. Catalyzes the ATP-dependent phosphorylation of thiamine-monophosphate (TMP) to form thiamine-pyrophosphate (TPP), the active form of vitamin B1. The protein is Thiamine-monophosphate kinase of Halobacterium salinarum (strain ATCC 700922 / JCM 11081 / NRC-1) (Halobacterium halobium).